A 346-amino-acid chain; its full sequence is Nicotinate-nucleotide--dimethylbenzimidazole phosphoribosyltransferase (346 aa).

The active-site Proton acceptor is the Glu-313.

It belongs to the CobT family.

It carries out the reaction 5,6-dimethylbenzimidazole + nicotinate beta-D-ribonucleotide = alpha-ribazole 5'-phosphate + nicotinate + H(+). The protein operates within nucleoside biosynthesis; alpha-ribazole biosynthesis; alpha-ribazole from 5,6-dimethylbenzimidazole: step 1/2. Catalyzes the synthesis of alpha-ribazole-5'-phosphate from nicotinate mononucleotide (NAMN) and 5,6-dimethylbenzimidazole (DMB). In Parabacteroides distasonis (strain ATCC 8503 / DSM 20701 / CIP 104284 / JCM 5825 / NCTC 11152), this protein is Nicotinate-nucleotide--dimethylbenzimidazole phosphoribosyltransferase.